Consider the following 1388-residue polypeptide: Dicer-like protein 2 (1388 aa).

Residues 23–203 (MLEASMKENI…LLMVESNLDA (181 aa)) form the Helicase ATP-binding domain. ATP is bound at residue 36-43 (MDTGSGKT). The DEAH box motif lies at 144–147 (DEAH). The Helicase C-terminal domain maps to 368–537 (KFESLLNFLD…DDERQLQSVS (170 aa)). In terms of domain architecture, Dicer dsRNA-binding fold spans 564–658 (AMAHLHHFCA…LPLTKKPELK (95 aa)). RNase III domains follow at residues 906-1059 (ISAI…VDGG) and 1098-1281 (NDRL…VDSG). Mg(2+)-binding residues include glutamate 1137, aspartate 1267, and glutamate 1270.

This sequence belongs to the helicase family. Dicer subfamily. Requires Mg(2+) as cofactor. Mn(2+) serves as cofactor.

Dicer-like endonuclease involved in cleaving double-stranded RNA in the RNA interference (RNAi) pathway. Produces 21 to 25 bp dsRNAs (siRNAs) which target the selective destruction of homologous RNAs leading to sequence-specific suppression of gene expression, called post-transcriptional gene silencing (PTGS). Part of a broad host defense response against viral infection and transposons. The chain is Dicer-like protein 2 (dcl2) from Aspergillus fumigatus (strain ATCC MYA-4609 / CBS 101355 / FGSC A1100 / Af293) (Neosartorya fumigata).